The chain runs to 96 residues: UPF0235 protein VP2619 (96 aa).

This sequence belongs to the UPF0235 family.

The protein is UPF0235 protein VP2619 of Vibrio parahaemolyticus serotype O3:K6 (strain RIMD 2210633).